Consider the following 282-residue polypeptide: Putative hydrolase Bmul_3283/BMULJ_05242 (282 aa).

Mg(2+) contacts are provided by E124, E126, and D155.

Belongs to the FAH family. Mg(2+) serves as cofactor.

The polypeptide is Putative hydrolase Bmul_3283/BMULJ_05242 (Burkholderia multivorans (strain ATCC 17616 / 249)).